A 160-amino-acid polypeptide reads, in one-letter code: Putative pre-16S rRNA nuclease (160 aa).

The protein belongs to the YqgF nuclease family.

It localises to the cytoplasm. Could be a nuclease involved in processing of the 5'-end of pre-16S rRNA. In Cereibacter sphaeroides (strain KD131 / KCTC 12085) (Rhodobacter sphaeroides), this protein is Putative pre-16S rRNA nuclease.